Consider the following 311-residue polypeptide: Thioredoxin reductase (311 aa).

Residues 15–18 (SGPA), 37–44 (EGTQFGGA), Asn-53, and Val-86 each bind FAD. A disulfide bridge connects residues Cys-137 and Cys-140. NADP(+) contacts are provided by Ser-158, His-177, Arg-183, Ile-240, and Tyr-260. Residues Asp-280 and 287-290 (RQAI) contribute to the FAD site. An NADP(+)-binding site is contributed by Arg-287.

It belongs to the class-II pyridine nucleotide-disulfide oxidoreductase family. Homodimer. FAD serves as cofactor.

The protein resides in the cytoplasm. It catalyses the reaction [thioredoxin]-dithiol + NADP(+) = [thioredoxin]-disulfide + NADPH + H(+). The protein is Thioredoxin reductase of Mycolicibacterium smegmatis (Mycobacterium smegmatis).